The following is a 139-amino-acid chain: NADPH-dependent 7-cyano-7-deazaguanine reductase (139 aa).

The active-site Thioimide intermediate is the Cys-34. The Proton donor role is filled by Asp-41. Substrate is bound by residues 56-58 (IEL) and 75-76 (HE).

Belongs to the GTP cyclohydrolase I family. QueF type 1 subfamily.

It is found in the cytoplasm. The catalysed reaction is 7-aminomethyl-7-carbaguanine + 2 NADP(+) = 7-cyano-7-deazaguanine + 2 NADPH + 3 H(+). It participates in tRNA modification; tRNA-queuosine biosynthesis. In terms of biological role, catalyzes the NADPH-dependent reduction of 7-cyano-7-deazaguanine (preQ0) to 7-aminomethyl-7-deazaguanine (preQ1). This is NADPH-dependent 7-cyano-7-deazaguanine reductase from Nitrosomonas eutropha (strain DSM 101675 / C91 / Nm57).